The primary structure comprises 99 residues: Aspartyl/glutamyl-tRNA(Asn/Gln) amidotransferase subunit C (99 aa).

The protein belongs to the GatC family. Heterotrimer of A, B and C subunits.

The catalysed reaction is L-glutamyl-tRNA(Gln) + L-glutamine + ATP + H2O = L-glutaminyl-tRNA(Gln) + L-glutamate + ADP + phosphate + H(+). It catalyses the reaction L-aspartyl-tRNA(Asn) + L-glutamine + ATP + H2O = L-asparaginyl-tRNA(Asn) + L-glutamate + ADP + phosphate + 2 H(+). Functionally, allows the formation of correctly charged Asn-tRNA(Asn) or Gln-tRNA(Gln) through the transamidation of misacylated Asp-tRNA(Asn) or Glu-tRNA(Gln) in organisms which lack either or both of asparaginyl-tRNA or glutaminyl-tRNA synthetases. The reaction takes place in the presence of glutamine and ATP through an activated phospho-Asp-tRNA(Asn) or phospho-Glu-tRNA(Gln). In Rhodococcus erythropolis (strain PR4 / NBRC 100887), this protein is Aspartyl/glutamyl-tRNA(Asn/Gln) amidotransferase subunit C.